Reading from the N-terminus, the 177-residue chain is Ribosome maturation factor RimP (177 aa).

The protein belongs to the RimP family.

It localises to the cytoplasm. Its function is as follows. Required for maturation of 30S ribosomal subunits. The polypeptide is Ribosome maturation factor RimP (Mycobacterium marinum (strain ATCC BAA-535 / M)).